A 378-amino-acid chain; its full sequence is Spermidine/putrescine import ATP-binding protein PotA (378 aa).

In terms of domain architecture, ABC transporter spans 18–248 (VLLSGISKSF…PKNLFVAGFI (231 aa)). 50–57 (GPSGCGKT) is a binding site for ATP.

The protein belongs to the ABC transporter superfamily. Spermidine/putrescine importer (TC 3.A.1.11.1) family. In terms of assembly, the complex is composed of two ATP-binding proteins (PotA), two transmembrane proteins (PotB and PotC) and a solute-binding protein (PotD).

Its subcellular location is the cell inner membrane. It catalyses the reaction ATP + H2O + polyamine-[polyamine-binding protein]Side 1 = ADP + phosphate + polyamineSide 2 + [polyamine-binding protein]Side 1.. In terms of biological role, part of the ABC transporter complex PotABCD involved in spermidine/putrescine import. Responsible for energy coupling to the transport system. The protein is Spermidine/putrescine import ATP-binding protein PotA of Salmonella paratyphi A (strain ATCC 9150 / SARB42).